The sequence spans 438 residues: 23S rRNA (uracil(1939)-C(5))-methyltransferase RlmD (438 aa).

Residues 13–71 (KAPLGPMQTYLVEGLTHEAKGVARLNGKVTFIEGALPGETVTAQVNKPGRRFDEAVLNA) enclose the TRAM domain. 4 residues coordinate [4Fe-4S] cluster: Cys-84, Cys-90, Cys-93, and Cys-167. Residues Gln-271, Phe-300, Asn-305, Glu-321, Asp-348, and Asp-368 each contribute to the S-adenosyl-L-methionine site. Catalysis depends on Cys-394, which acts as the Nucleophile.

This sequence belongs to the class I-like SAM-binding methyltransferase superfamily. RNA M5U methyltransferase family. RlmD subfamily.

The enzyme catalyses uridine(1939) in 23S rRNA + S-adenosyl-L-methionine = 5-methyluridine(1939) in 23S rRNA + S-adenosyl-L-homocysteine + H(+). Functionally, catalyzes the formation of 5-methyl-uridine at position 1939 (m5U1939) in 23S rRNA. The chain is 23S rRNA (uracil(1939)-C(5))-methyltransferase RlmD from Marinomonas posidonica (strain CECT 7376 / NCIMB 14433 / IVIA-Po-181).